The chain runs to 341 residues: Glycerol-3-phosphate dehydrogenase [NAD(P)+] (341 aa).

NADPH is bound by residues Ser-15, Trp-16, Arg-36, and Lys-110. Residues Lys-110, Gly-139, and Ser-141 each coordinate sn-glycerol 3-phosphate. Ala-143 is an NADPH binding site. 5 residues coordinate sn-glycerol 3-phosphate: Lys-194, Asp-247, Ser-257, Arg-258, and Asn-259. Lys-194 serves as the catalytic Proton acceptor. NADPH is bound at residue Arg-258. NADPH is bound by residues Val-282 and Glu-284.

This sequence belongs to the NAD-dependent glycerol-3-phosphate dehydrogenase family.

The protein resides in the cytoplasm. It carries out the reaction sn-glycerol 3-phosphate + NAD(+) = dihydroxyacetone phosphate + NADH + H(+). The enzyme catalyses sn-glycerol 3-phosphate + NADP(+) = dihydroxyacetone phosphate + NADPH + H(+). It participates in membrane lipid metabolism; glycerophospholipid metabolism. Functionally, catalyzes the reduction of the glycolytic intermediate dihydroxyacetone phosphate (DHAP) to sn-glycerol 3-phosphate (G3P), the key precursor for phospholipid synthesis. The sequence is that of Glycerol-3-phosphate dehydrogenase [NAD(P)+] from Xanthomonas campestris pv. campestris (strain 8004).